A 907-amino-acid polypeptide reads, in one-letter code: Putative ATP-dependent DNA helicase DDX11-like protein 8 (907 aa).

In terms of domain architecture, Helicase ATP-binding spans 9–447; the sequence is GAIHFPFPFT…KNLMYLKQIL (439 aa). 44 to 51 is an ATP binding site; the sequence is SPTGTGKS. The interval 202–222 is disordered; sequence YESDEEKKVASGHRVDEDEDD. Over residues 206-217 the composition is skewed to basic and acidic residues; it reads EEKKVASGHRVD. The residue at position 264 (Ser-264) is a Phosphoserine. Cys-269 and Cys-287 together coordinate [4Fe-4S] cluster. Residues 291–306 show a composition bias toward basic and acidic residues; that stretch reads QRSRHEKKKGAEEEKP. Positions 291 to 314 are disordered; it reads QRSRHEKKKGAEEEKPKRRRQEKQ. [4Fe-4S] cluster is bound by residues Cys-317 and Cys-352. Positions 395-398 match the DEAH motif; the sequence is DEAH.

It belongs to the DEAD box helicase family. DEAH subfamily. DDX11/CHL1 sub-subfamily. [4Fe-4S] cluster is required as a cofactor.

It localises to the nucleus. It is found in the nucleolus. Functionally, putative DNA helicase. The polypeptide is Putative ATP-dependent DNA helicase DDX11-like protein 8 (DDX11L8) (Homo sapiens (Human)).